The sequence spans 344 residues: Ferrochelatase (344 aa).

Fe cation-binding residues include H214 and E295.

This sequence belongs to the ferrochelatase family.

Its subcellular location is the cytoplasm. It catalyses the reaction heme b + 2 H(+) = protoporphyrin IX + Fe(2+). It participates in porphyrin-containing compound metabolism; protoheme biosynthesis; protoheme from protoporphyrin-IX: step 1/1. In terms of biological role, catalyzes the ferrous insertion into protoporphyrin IX. The protein is Ferrochelatase of Agrobacterium fabrum (strain C58 / ATCC 33970) (Agrobacterium tumefaciens (strain C58)).